A 790-amino-acid chain; its full sequence is Pentatricopeptide repeat-containing protein OTP51, chloroplastic (790 aa).

The N-terminal 56 residues, 1–56 (MATTSPCAAPSPSLRCPLALSHPFASPPPPPALRLAGPKLLPGRLAVSPPPGIPAV), are a transit peptide targeting the chloroplast. 10 PPR repeats span residues 182–216 (NFAL…GRVP), 217–254 (AEST…GGYK), 256–296 (RLSL…NLDV), 299–333 (DVYA…GFDE), 334–368 (GIDV…GSDL), 369–403 (PVQA…NIPP), 404–438 (NVAS…DMKH), 439–469 (LMPA…CIAR), 473–507 (NRIL…GMIG), and 509–543 (NTKS…KYDV). The interval 762 to 790 (GSSIGSDGTQDTDTDSDDDMQMSDTERDE) is disordered. The segment covering 771 to 790 (QDTDTDSDDDMQMSDTERDE) has biased composition (acidic residues).

The protein belongs to the PPR family. P subfamily.

The protein resides in the plastid. It is found in the chloroplast. In terms of biological role, promotes the splicing of group II introns in chloroplasts. Required for the splicing of intron 2 of plastid ycf3 transcripts, a factor required for the assembly of photosystem I (PSI). Involved in the splicing of atpF, ndhA, petB and rps16 chloroplastic transcripts. Required for the assembly of PSI. The sequence is that of Pentatricopeptide repeat-containing protein OTP51, chloroplastic from Oryza sativa subsp. japonica (Rice).